The sequence spans 138 residues: Small ribosomal subunit protein uS11c (138 aa).

A disordered region spans residues 1–23 (MAKPIPRIGSRRNGRIGSRKSAR). Residues 9–23 (GSRRNGRIGSRKSAR) show a composition bias toward basic residues.

It belongs to the universal ribosomal protein uS11 family. Part of the 30S ribosomal subunit.

Its subcellular location is the plastid. The protein localises to the chloroplast. This Vitis vinifera (Grape) protein is Small ribosomal subunit protein uS11c.